The sequence spans 212 residues: Ribosomal RNA small subunit methyltransferase G (212 aa).

Residues Gly-80, Leu-85, 131–132 (AE), and Arg-146 contribute to the S-adenosyl-L-methionine site.

This sequence belongs to the methyltransferase superfamily. RNA methyltransferase RsmG family.

The protein localises to the cytoplasm. It carries out the reaction guanosine(527) in 16S rRNA + S-adenosyl-L-methionine = N(7)-methylguanosine(527) in 16S rRNA + S-adenosyl-L-homocysteine. Specifically methylates the N7 position of guanine in position 527 of 16S rRNA. This is Ribosomal RNA small subunit methyltransferase G from Xanthomonas euvesicatoria pv. vesicatoria (strain 85-10) (Xanthomonas campestris pv. vesicatoria).